The following is a 467-amino-acid chain: Trigger factor (467 aa).

One can recognise a PPIase FKBP-type domain in the interval 174–261; sequence SDIAILTFKG…LQDLKTRELP (88 aa). Residues 439-467 are disordered; it reads PKKALNEKVKSSKPKNTQKKTDKTKKDSP. Over residues 457-467 the composition is skewed to basic and acidic residues; it reads KKTDKTKKDSP.

Belongs to the FKBP-type PPIase family. Tig subfamily.

The protein resides in the cytoplasm. The enzyme catalyses [protein]-peptidylproline (omega=180) = [protein]-peptidylproline (omega=0). Its function is as follows. Involved in protein export. Acts as a chaperone by maintaining the newly synthesized protein in an open conformation. Functions as a peptidyl-prolyl cis-trans isomerase. The polypeptide is Trigger factor (Prochlorococcus marinus (strain SARG / CCMP1375 / SS120)).